Reading from the N-terminus, the 151-residue chain is MALYEHVYLARQDISAQQVEALTEQLKSVIESFQGKVTKVEYWGVKSLAYRIKKNRKAHFSLLNIEAPAAALTEMERQMGINEDVLRFMTLRVEEHEQGPSAMMRKRDDDDRGERGERPRGPRPERGERGERGERGPRRPREDNIGEEGLY.

Residues 94–151 (EEHEQGPSAMMRKRDDDDRGERGERPRGPRPERGERGERGERGPRRPREDNIGEEGLY) are disordered. The span at 105–144 (RKRDDDDRGERGERPRGPRPERGERGERGERGPRRPREDN) shows a compositional bias: basic and acidic residues.

The protein belongs to the bacterial ribosomal protein bS6 family.

Binds together with bS18 to 16S ribosomal RNA. The chain is Small ribosomal subunit protein bS6 from Beijerinckia indica subsp. indica (strain ATCC 9039 / DSM 1715 / NCIMB 8712).